Consider the following 108-residue polypeptide: Thiosulfate sulfurtransferase GlpE (108 aa).

The Rhodanese domain occupies 17-105 (QEKEAVLVDI…WQRQFPAEVA (89 aa)). Cys-65 functions as the Cysteine persulfide intermediate in the catalytic mechanism.

Belongs to the GlpE family.

Its subcellular location is the cytoplasm. The enzyme catalyses thiosulfate + hydrogen cyanide = thiocyanate + sulfite + 2 H(+). The catalysed reaction is thiosulfate + [thioredoxin]-dithiol = [thioredoxin]-disulfide + hydrogen sulfide + sulfite + 2 H(+). Functionally, transferase that catalyzes the transfer of sulfur from thiosulfate to thiophilic acceptors such as cyanide or dithiols. May function in a CysM-independent thiosulfate assimilation pathway by catalyzing the conversion of thiosulfate to sulfite, which can then be used for L-cysteine biosynthesis. This chain is Thiosulfate sulfurtransferase GlpE, found in Escherichia coli O139:H28 (strain E24377A / ETEC).